A 164-amino-acid chain; its full sequence is ATP synthase subunit b (164 aa).

Residues 10 to 32 traverse the membrane as a helical segment; the sequence is AVAFVLFFVLFGKKLWTPLAAAL.

It belongs to the ATPase B chain family. F-type ATPases have 2 components, F(1) - the catalytic core - and F(0) - the membrane proton channel. F(1) has five subunits: alpha(3), beta(3), gamma(1), delta(1), epsilon(1). F(0) has three main subunits: a(1), b(2) and c(10-14). The alpha and beta chains form an alternating ring which encloses part of the gamma chain. F(1) is attached to F(0) by a central stalk formed by the gamma and epsilon chains, while a peripheral stalk is formed by the delta and b chains.

The protein localises to the cell inner membrane. Functionally, f(1)F(0) ATP synthase produces ATP from ADP in the presence of a proton or sodium gradient. F-type ATPases consist of two structural domains, F(1) containing the extramembraneous catalytic core and F(0) containing the membrane proton channel, linked together by a central stalk and a peripheral stalk. During catalysis, ATP synthesis in the catalytic domain of F(1) is coupled via a rotary mechanism of the central stalk subunits to proton translocation. In terms of biological role, component of the F(0) channel, it forms part of the peripheral stalk, linking F(1) to F(0). This Gluconacetobacter diazotrophicus (strain ATCC 49037 / DSM 5601 / CCUG 37298 / CIP 103539 / LMG 7603 / PAl5) protein is ATP synthase subunit b.